A 249-amino-acid chain; its full sequence is Nicotinamide/nicotinic acid mononucleotide adenylyltransferase (249 aa).

NAD(+) contacts are provided by S34 and F35. ATP contacts are provided by H42 and K75. Residues T112, G141, D143, W154, R173, and N204 each coordinate NAD(+). Residue 209–210 (SR) participates in ATP binding.

It belongs to the eukaryotic NMN adenylyltransferase family. A divalent metal cation serves as cofactor.

The catalysed reaction is beta-nicotinamide D-ribonucleotide + ATP + H(+) = diphosphate + NAD(+). It catalyses the reaction nicotinate beta-D-ribonucleotide + ATP + H(+) = deamido-NAD(+) + diphosphate. It participates in cofactor biosynthesis; NAD(+) biosynthesis; deamido-NAD(+) from nicotinate D-ribonucleotide: step 1/1. It functions in the pathway cofactor biosynthesis; NAD(+) biosynthesis; NAD(+) from nicotinamide D-ribonucleotide: step 1/1. In terms of biological role, catalyzes the formation of NAD(+) from nicotinamide mononucleotide (NMN) and ATP. Can also use the deamidated form; nicotinic acid mononucleotide (NaMN) as substrate. The sequence is that of Nicotinamide/nicotinic acid mononucleotide adenylyltransferase from Oryza sativa subsp. japonica (Rice).